The following is a 1157-amino-acid chain: Nitric oxide synthase, inducible (1157 aa).

Positions 23–27 match the DINNN-motif; mediates interaction with SPSB1, SPSB2 and SPSB4 motif; the sequence is DINNN. A disordered region spans residues 29 to 64; that stretch reads EKLRQASSSPVTQDDPKCPSRSRHRNECSQPLAETA. Residues C110 and C115 each contribute to the Zn(2+) site. Heme b is bound at residue C200. L-arginine contacts are provided by Q263, W372, Y373, and E377. Residues R381, I462, W463, and F476 each contribute to the (6R)-L-erythro-5,6,7,8-tetrahydrobiopterin site. Heme b is bound at residue Y491. Positions 515 to 535 are calmodulin-binding; that stretch reads FKVLVKAVLFAAVLMHKTMAA. The 139-residue stretch at 539–677 folds into the Flavodoxin-like domain; it reads ATILFATETG…AFRGWAVQTF (139 aa). Residues T545, E546, T547, R549, S550, S591, T592, S628, C635, E661, and Q665 each coordinate FMN. In terms of domain architecture, FAD-binding FR-type spans 730-970; the sequence is KYVFSMRLKS…VRSASGFQLP (241 aa). R750 is a binding site for NADP(+). 6 residues coordinate FAD: H772, R906, Y908, S909, T924, and A926. An NADP(+)-binding site is contributed by T929. Positions 930, 943, 944, and 945 each coordinate FAD. NADP(+)-binding residues include T984, R1017, S1046, R1047, K1053, Y1055, Q1057, and D1090. The tract at residues 1138-1157 is disordered; it reads KEGAVGPPSDPRAPGAHGKS.

The protein belongs to the NOS family. As to quaternary structure, homodimer. Interacts with NHERF1. Interacts with GAPDH; induced by oxidatively-modified low-densitity lipoprotein (LDL(ox)). Interacts with S100A8 and S100A9 to form the iNOS-S100A8/9 transnitrosylase complex. Interacts with SPSB1, SPSB2 and SPSB4. Interacts with ELOC and CUL5 in the presence of SPSB1 or SPSB2 or SPSB4. Forms a complex with ASL, ASS1 and HSP90AA1; the complex regulates cell-autonomous L-arginine synthesis and citrulline recycling while channeling extracellular L-arginine to nitric oxide synthesis pathway. The cofactor is heme b. FAD is required as a cofactor. It depends on FMN as a cofactor. Requires (6R)-L-erythro-5,6,7,8-tetrahydrobiopterin as cofactor. Post-translationally, polyubiquitinated; mediated by SPSB1, SPSB2 and SPSB4, leading to proteasomal degradation. As to expression, detected in both stimulated and unstimulated immune cells and macrophages with little or no up-regulation following cellular stimulation with lipopolysaccharides (LPS) or concanavalin A (ConA).

The protein localises to the cytoplasm. The protein resides in the cytosol. The catalysed reaction is 2 L-arginine + 3 NADPH + 4 O2 + H(+) = 2 L-citrulline + 2 nitric oxide + 3 NADP(+) + 4 H2O. With respect to regulation, not stimulated by calcium/calmodulin. In terms of biological role, produces nitric oxide (NO) which is a messenger molecule with diverse functions throughout the body. In macrophages, NO mediates tumoricidal and bactericidal actions. Also has nitrosylase activity and mediates cysteine S-nitrosylation of cytoplasmic target proteins such PTGS2/COX2. As component of the iNOS-S100A8/9 transnitrosylase complex involved in the selective inflammatory stimulus-dependent S-nitrosylation of GAPDH implicated in regulation of the GAIT complex activity and probably multiple targets including ANXA5, EZR, MSN and VIM. Involved in inflammation, enhances the synthesis of pro-inflammatory mediators such as IL6 and IL8. The sequence is that of Nitric oxide synthase, inducible (NOS2) from Sus scrofa (Pig).